We begin with the raw amino-acid sequence, 266 residues long: Undecaprenyl-diphosphatase (266 aa).

A run of 7 helical transmembrane segments spans residues 41–61 (NLAF…VILW), 82–102 (YVIN…FFKD), 106–126 (AIFG…AALL), 140–160 (ISMK…LPGL), 180–200 (LAQF…LLDG), 213–233 (IPTL…CLAC), and 245–265 (LIYF…VSQL).

The protein belongs to the UppP family.

Its subcellular location is the cell inner membrane. The catalysed reaction is di-trans,octa-cis-undecaprenyl diphosphate + H2O = di-trans,octa-cis-undecaprenyl phosphate + phosphate + H(+). Its function is as follows. Catalyzes the dephosphorylation of undecaprenyl diphosphate (UPP). Confers resistance to bacitracin. This chain is Undecaprenyl-diphosphatase, found in Bacteroides fragilis (strain ATCC 25285 / DSM 2151 / CCUG 4856 / JCM 11019 / LMG 10263 / NCTC 9343 / Onslow / VPI 2553 / EN-2).